We begin with the raw amino-acid sequence, 136 residues long: Histone H3 (136 aa).

Residues 1–43 (MARTKQTARKSTGGKAPRKQLASKAARKSAPSTGGVKKPHRYK) form a disordered region. Position 5 is an N6,N6,N6-trimethyllysine; alternate (Lys-5). N6,N6-dimethyllysine; alternate is present on Lys-5. N6-methyllysine; alternate is present on residues Lys-5 and Lys-10. Lys-10 bears the N6-acetyllysine; alternate mark. At Ser-11 the chain carries Phosphoserine. Residue Lys-15 is modified to N6,N6-dimethyllysine; alternate. An N6-methyllysine; alternate mark is found at Lys-15, Lys-19, Lys-24, Lys-28, and Lys-37. An N6-acetyllysine; alternate mark is found at Lys-15, Lys-19, Lys-24, Lys-28, and Lys-37. Lys-28 and Lys-37 each carry N6,N6,N6-trimethyllysine; alternate. N6,N6-dimethyllysine; alternate occurs at positions 28 and 37. N6-acetyllysine is present on residues Lys-57 and Lys-65. The residue at position 80 (Lys-80) is an N6,N6,N6-trimethyllysine; alternate. N6,N6-dimethyllysine; alternate is present on Lys-80. Residue Lys-80 is modified to N6-methyllysine; alternate.

This sequence belongs to the histone H3 family. In terms of assembly, the nucleosome is a histone octamer containing two molecules each of H2A, H2B, H3 and H4 assembled in one H3-H4 heterotetramer and two H2A-H2B heterodimers. The octamer wraps approximately 147 bp of DNA. Phosphorylated by IPL1 to form H3S10ph. H3S10ph promotes subsequent H3K14ac formation by GCN5 and is required for transcriptional activation through TBP recruitment to the promoters. Post-translationally, mono-, di- and trimethylated by the COMPASS complex to form H3K4me1/2/3. H3K4me activates gene expression by regulating transcription elongation and plays a role in telomere length maintenance. H3K4me enrichment correlates with transcription levels, and occurs in a 5' to 3' gradient with H3K4me3 enrichment at the 5'-end of genes, shifting to H3K4me2 and then H3K4me1. Methylated by SET2 to form H3K36me. H3K36me represses gene expression. Methylated by DOT1 to form H3K79me. H3K79me is required for association of SIR proteins with telomeric regions and for telomeric silencing. The COMPASS-mediated formation of H3K4me2/3 and the DOT1-mediated formation of H3K79me require H2BK123ub1. In terms of processing, acetylation of histone H3 leads to transcriptional activation. H3K14ac formation by GCN5 is promoted by H3S10ph. H3K14ac can also be formed by ESA1. H3K56ac formation occurs predominantly in newly synthesized H3 molecules during G1, S and G2/M of the cell cycle and may be involved in DNA repair.

It localises to the nucleus. The protein resides in the chromosome. In terms of biological role, core component of nucleosome. Nucleosomes wrap and compact DNA into chromatin, limiting DNA accessibility to the cellular machineries which require DNA as a template. Histones thereby play a central role in transcription regulation, DNA repair, DNA replication and chromosomal stability. DNA accessibility is regulated via a complex set of post-translational modifications of histones, also called histone code, and nucleosome remodeling. This is Histone H3 (HHT1) from Candida glabrata (strain ATCC 2001 / BCRC 20586 / JCM 3761 / NBRC 0622 / NRRL Y-65 / CBS 138) (Yeast).